A 478-amino-acid polypeptide reads, in one-letter code: ATP synthase subunit beta (478 aa).

G158–T165 is a binding site for ATP.

The protein belongs to the ATPase alpha/beta chains family. As to quaternary structure, F-type ATPases have 2 components, CF(1) - the catalytic core - and CF(0) - the membrane proton channel. CF(1) has five subunits: alpha(3), beta(3), gamma(1), delta(1), epsilon(1). CF(0) has three main subunits: a(1), b(2) and c(9-12). The alpha and beta chains form an alternating ring which encloses part of the gamma chain. CF(1) is attached to CF(0) by a central stalk formed by the gamma and epsilon chains, while a peripheral stalk is formed by the delta and b chains.

Its subcellular location is the cell inner membrane. The enzyme catalyses ATP + H2O + 4 H(+)(in) = ADP + phosphate + 5 H(+)(out). Produces ATP from ADP in the presence of a proton gradient across the membrane. The catalytic sites are hosted primarily by the beta subunits. This Rhizobium johnstonii (strain DSM 114642 / LMG 32736 / 3841) (Rhizobium leguminosarum bv. viciae) protein is ATP synthase subunit beta.